The primary structure comprises 392 residues: N-acyl-phosphatidylethanolamine-hydrolyzing phospholipase D (392 aa).

Met1 bears the N-acetylmethionine mark. Residues 1-16 (MDENETNQLLMTSNQY) show a composition bias toward polar residues. Positions 1–39 (MDENETNQLLMTSNQYPKEAVRKRQNSRNSGGSDSSRFS) are disordered. The span at 27–36 (SRNSGGSDSS) shows a compositional bias: low complexity. Positions 183 and 185 each coordinate Zn(2+). Tyr186 is an an N-acyl-1,2-diacyl-sn-glycero-3-phosphoethanolamine binding site. Residues Asp187, His188, and His251 each contribute to the Zn(2+) site. The deoxycholate site is built by Lys254 and Met258. Zn(2+) is bound at residue Asp282. Position 319 (His319) interacts with an N-acyl-1,2-diacyl-sn-glycero-3-phosphoethanolamine. His341 is a Zn(2+) binding site. Ala346 serves as a coordination point for deoxycholate.

Belongs to the NAPE-PLD family. As to quaternary structure, homodimer. Bile acids promote the assembly of inactive monomers into an active dimer and enable catalysis. Requires Zn(2+) as cofactor. Widely expressed. Highest expression in brain, kidney and testis (at protein level). Expressed in adipose tissue (at protein level).

The protein resides in the golgi apparatus membrane. It localises to the early endosome membrane. The protein localises to the nucleus envelope. It is found in the nucleus. Its subcellular location is the nucleoplasm. The catalysed reaction is an N-acyl-1,2-diacyl-sn-glycero-3-phosphoethanolamine + H2O = an N-acylethanolamine + a 1,2-diacyl-sn-glycero-3-phosphate + H(+). It catalyses the reaction N-butanoyl-1-hexadecanoyl-2-(9Z,12Z-octadecadienoyl)-sn-glycero-3-phosphoethanolamine + H2O = N-butanoyl ethanolamine + 1-hexadecanoyl-2-(9Z,12Z-octadecadienoyl)-sn-glycero-3-phosphate + H(+). The enzyme catalyses N-hexanoyl-1-hexadecanoyl-2-(9Z,12Z-octadecadienoyl)-sn-glycero-3-phosphoethanolamine + H2O = N-hexanoyl ethanolamine + 1-hexadecanoyl-2-(9Z,12Z-octadecadienoyl)-sn-glycero-3-phosphate + H(+). It carries out the reaction N-octanoyl-1-hexadecanoyl-2-(9Z,12Z-octadecadienoyl)-sn-glycero-3-phosphoethanolamine + H2O = N-octanoyl ethanolamine + 1-hexadecanoyl-2-(9Z,12Z-octadecadienoyl)-sn-glycero-3-phosphate + H(+). The catalysed reaction is N-decanoyl-1-hexadecanoyl-2-(9Z,12Z-octadecadienoyl)-sn-glycero-3-phosphoethanolamine + H2O = N-decanoyl ethanolamine + 1-hexadecanoyl-2-(9Z,12Z-octadecadienoyl)-sn-glycero-3-phosphate + H(+). It catalyses the reaction N-dodecanoyl-1,2-di-(9Z-octadecenoyl)-sn-glycero-3-phosphoethanolamine + H2O = N-dodecanoylethanolamine + 1,2-di-(9Z-octadecenoyl)-sn-glycero-3-phosphate + H(+). The enzyme catalyses N-tetradecanoyl-1,2-di-(9Z-octadecenoyl)-sn-glycero-3-phosphoethanolamine + H2O = N-tetradecanoylethanolamine + 1,2-di-(9Z-octadecenoyl)-sn-glycero-3-phosphate + H(+). It carries out the reaction N-hexadecanoyl-1,2-di-(9Z-octadecenoyl)-sn-glycero-3-phosphoethanolamine + H2O = N-hexadecanoylethanolamine + 1,2-di-(9Z-octadecenoyl)-sn-glycero-3-phosphate + H(+). The catalysed reaction is N,1-dihexadecanoyl-2-(9Z,12Z-octadecadienoyl)-sn-glycero-3-phosphoethanolamine + H2O = 1-hexadecanoyl-2-(9Z,12Z-octadecadienoyl)-sn-glycero-3-phosphate + N-hexadecanoylethanolamine + H(+). It catalyses the reaction N-octadecanoyl-1,2-di-(9Z-octadecenoyl)-sn-glycero-3-phosphoethanolamine + H2O = N-octadecanoyl ethanolamine + 1,2-di-(9Z-octadecenoyl)-sn-glycero-3-phosphate + H(+). The enzyme catalyses N,1,2-tri-(9Z-octadecenoyl)-sn-glycero-3-phosphoethanolamine + H2O = N-(9Z-octadecenoyl) ethanolamine + 1,2-di-(9Z-octadecenoyl)-sn-glycero-3-phosphate + H(+). It carries out the reaction N-(5Z,8Z,11Z,14Z-eicosatetraenoyl)-1,2-diacyl-sn-glycero-3-phosphoethanolamine + H2O = N-(5Z,8Z,11Z,14Z-eicosatetraenoyl)-ethanolamine + a 1,2-diacyl-sn-glycero-3-phosphate + H(+). The catalysed reaction is N-(5Z,8Z,11Z,14Z-eicosatetraenoyl)-1,2-di-(9Z-octadecenoyl)-sn-glycero-3-phosphoethanolamine + H2O = N-(5Z,8Z,11Z,14Z-eicosatetraenoyl)-ethanolamine + 1,2-di-(9Z-octadecenoyl)-sn-glycero-3-phosphate + H(+). It catalyses the reaction 1-O-(1Z-octadecenoyl)-2-(9Z-octadecenoyl)-sn-glycero-3-phospho-N-hexadecanoyl-ethanolamine + H2O = 1-O-(1Z-octadecenoyl)-2-(9Z-octadecenoyl)-sn-glycero-3-phosphate + N-hexadecanoylethanolamine + H(+). The enzyme catalyses N,1-diacyl-sn-glycero-3-phosphoethanolamine + H2O = an N-acylethanolamine + a 1-acyl-sn-glycero-3-phosphate + H(+). It carries out the reaction N,1-dihexadecanoyl-sn-glycero-3-phosphoethanolamine + H2O = N-hexadecanoylethanolamine + 1-hexadecanoyl-sn-glycero-3-phosphate + H(+). The catalysed reaction is N-(5Z,8Z,11Z,14Z-eicosatetraenoyl)-1-(9Z-octadecenoyl)-sn-glycero-3-phosphoethanolamine + H2O = N-(5Z,8Z,11Z,14Z-eicosatetraenoyl)-ethanolamine + 1-(9Z-octadecenoyl)-sn-glycero-3-phosphate + H(+). Activated by divalent cations. Activated by bile acids. D-type phospholipase that hydrolyzes N-acyl-phosphatidylethanolamines (NAPEs) to produce bioactive N-acylethanolamines/fatty acid ethanolamides (NAEs/FAEs) and phosphatidic acid. Cleaves the terminal phosphodiester bond of diacyl- and alkenylacyl-NAPEs, primarily playing a role in the generation of long-chain saturated and monounsaturated NAEs in the brain. May control NAPE homeostasis in dopaminergic neuron membranes and regulate neuron survival, partly through RAC1 activation. As a regulator of lipid metabolism in the adipose tissue, mediates the crosstalk between adipocytes, gut microbiota and immune cells to control body temperature and weight. In particular, regulates energy homeostasis by promoting cold-induced brown or beige adipocyte differentiation program to generate heat from fatty acids and glucose. Has limited D-type phospholipase activity toward N-acyl lyso-NAPEs. The protein is N-acyl-phosphatidylethanolamine-hydrolyzing phospholipase D (NAPEPLD) of Bos taurus (Bovine).